The sequence spans 384 residues: MTAIPLGLPGVPVRPIAERRVSRRIQVGPVAVGGGAPVSVQSMTTTRTSDIGATLQQIAELTASGCQIVRVACPTQDDADALPVIARKSQIPVIADIHFQPKYVFAAIEAGCAAVRVNPGNIKQFDDKVKEIAKAAKDHGTPIRIGVNAGSLDRRLLQKYGRATPEALAESALWEASLFEEHDFRDIKISVKHNDPVVMVEAYRQLAAQCDYPLHLGVTEAGPAFQGTIKSAVAFGALLSQGIGDTIRVSLSTPPVEEIKVGIQILESLNLRQRGLEIVSCPSCGRAQVDVYKLAEEVTAGLEGMEVPLRVAVMGCVVNGPGEAREADLGVASGNGKGQIFVKGEVVKTVPESKIVETLIEEAMRIAEQMEKDGASGAPAVTVS.

The [4Fe-4S] cluster site is built by cysteine 281, cysteine 284, cysteine 316, and glutamate 323.

It belongs to the IspG family. The cofactor is [4Fe-4S] cluster.

The enzyme catalyses (2E)-4-hydroxy-3-methylbut-2-enyl diphosphate + oxidized [flavodoxin] + H2O + 2 H(+) = 2-C-methyl-D-erythritol 2,4-cyclic diphosphate + reduced [flavodoxin]. Its pathway is isoprenoid biosynthesis; isopentenyl diphosphate biosynthesis via DXP pathway; isopentenyl diphosphate from 1-deoxy-D-xylulose 5-phosphate: step 5/6. Converts 2C-methyl-D-erythritol 2,4-cyclodiphosphate (ME-2,4cPP) into 1-hydroxy-2-methyl-2-(E)-butenyl 4-diphosphate. The sequence is that of 4-hydroxy-3-methylbut-2-en-1-yl diphosphate synthase (flavodoxin) 1 from Streptomyces coelicolor (strain ATCC BAA-471 / A3(2) / M145).